We begin with the raw amino-acid sequence, 344 residues long: MTSREGRAPLARRAVVYGVVGLAAIAGVAMWSGAGWHRATGASGESPEASVAGGSVTAPPQAAVPASTGLPPSLAGSSAPRLPLDAGGHLAKSRAVRDFFDYCLTAQSDLSAAGLDAFVMREIAAQLDGTVAQAEALDVWHRYRAYLDALAKLRDAGAADKSDLGALQLALDQRASIAYRTLGDWSQPFFGAEQWRQRYDLARLKIAQDPTLTDAQKAERLAALEQQMPADERAAQQHIDQQRAAIDQIAQLQKSGATPDAMRAQLTQTLGPEAAARVAQMQQDDASWQSRYADYAAQRTQIESAGLSPQDRDAQIAALRQRVFTRPGEAVRAASLDRGAGSAR.

A helical membrane pass occupies residues 14-34 (AVVYGVVGLAAIAGVAMWSGA). The disordered stretch occupies residues 39–78 (ATGASGESPEASVAGGSVTAPPQAAVPASTGLPPSLAGSS).

Belongs to the lipase chaperone family.

The protein localises to the cell inner membrane. In terms of biological role, may be involved in the folding of the extracellular lipase during its passage through the periplasm. The sequence is that of Lipase chaperone (lifO) from Pseudomonas sp. (strain KWI-56).